Here is a 409-residue protein sequence, read N- to C-terminus: Tryptophan synthase beta chain (409 aa).

Lys-100 is subject to N6-(pyridoxal phosphate)lysine.

It belongs to the TrpB family. In terms of assembly, tetramer of two alpha and two beta chains. Pyridoxal 5'-phosphate is required as a cofactor.

It carries out the reaction (1S,2R)-1-C-(indol-3-yl)glycerol 3-phosphate + L-serine = D-glyceraldehyde 3-phosphate + L-tryptophan + H2O. Its pathway is amino-acid biosynthesis; L-tryptophan biosynthesis; L-tryptophan from chorismate: step 5/5. The beta subunit is responsible for the synthesis of L-tryptophan from indole and L-serine. This chain is Tryptophan synthase beta chain, found in Pyrobaculum arsenaticum (strain DSM 13514 / JCM 11321 / PZ6).